The primary structure comprises 193 residues: Protein B4 (193 aa).

Helical transmembrane passes span 15 to 35 (FFVC…CVFF), 36 to 56 (CVYF…VFFV), and 160 to 180 (LSLC…IVFS).

The protein resides in the host membrane. In Homo sapiens (Human), this protein is Protein B4 (B4).